The primary structure comprises 417 residues: MGRRRGVELYRAPFPLYALRIDPKTGLLIAAGGGGAAKTGIKNGVHFLQLEQISGCLSASLLHSHDTETRATMNLALAGDILAAGQDAQCQLLRFQIHQQKGSKAEKSGSKEQGPRQRKGAAPAEKKSGAEVHPEGVELKVKNLEAVQTDFSTEPLQKVVCFNHDNTLLATGGSDGHVRVWKVPSLEKVLEFKAHEGEIGDLALGPDGKLVTVGWDFKASVWQKDQLVTQLQWQENGPTSSNTPYRYQACRFGQVPDQPGGLRLFTVQIPHKRLRQPPPCYLTAWDSSTFLPLQTRSCGHEVISCLTVSESGTFLGLGTVTGSVAIYIAFSLQRLYYVKEAHGIVVTDVTFLPEKGCGPKLLGPHETALFSVAVDSRCQLHLLPSRRSVPVWLLLLLCVGLIIVTILLLQSAFPGFL.

The Cytoplasmic portion of the chain corresponds to 1 to 388; it reads MGRRRGVELY…QLHLLPSRRS (388 aa). Position 10 is a 3'-nitrotyrosine (Tyr-10). The tract at residues 101 to 135 is disordered; it reads KGSKAEKSGSKEQGPRQRKGAAPAEKKSGAEVHPE. 2 stretches are compositionally biased toward basic and acidic residues: residues 103-115 and 124-135; these read SKAEKSGSKEQGP and AEKKSGAEVHPE. WD repeat units follow at residues 152–191, 194–232, and 298–337; these read STEPLQKVVCFNHDNTLLATGGSDGHVRVWKVPSLEKVLE, AHEGEIGDLALGPDGKLVTVGWDFKASVWQKDQLVTQLQ, and CGHEVISCLTVSESGTFLGLGTVTGSVAIYIAFSLQRLYY. A helical transmembrane segment spans residues 389 to 409; that stretch reads VPVWLLLLLCVGLIIVTILLL. Residues 410-417 are Lumenal-facing; sequence QSAFPGFL.

In terms of assembly, interacts with SAR1B (GDP-bound form). Interacts with MIA2; recruits PREB to endoplasmic reticulum exit sites. Interacts with CIDEB; facilitating loading of SCAP-SREBP into COPII vesicles.

The protein localises to the endoplasmic reticulum membrane. The protein resides in the nucleus. Functionally, guanine nucleotide exchange factor (GEF) that regulates the assembly of the coat protein complex II/COPII in endoplasmic reticulum (ER) to Golgi vesicle-mediated transport. Selectively activates SAR1A and SAR1B by promoting the exchange of guanosine diphosphate (GDP) for guanosine triphosphate (GTP) in these small GTPases. In their activated GTP-bound state, SAR1A and SAR1B insert into the membrane of the endoplasmic reticulum where they recruit the remainder of the coat protein complex II/COPII which is responsible for both the sorting of proteins and the deformation and budding of membranes into vesicles destined to the Golgi. Its function is as follows. Was first identified based on its probable role in the regulation of pituitary gene transcription. Binds to the prolactin gene (PRL) promoter and seems to activate transcription. The protein is Guanine nucleotide-exchange factor SEC12 of Rattus norvegicus (Rat).